The primary structure comprises 567 residues: Dihydrolipoyllysine-residue acetyltransferase component of pyruvate dehydrogenase complex (567 aa).

2 Lipoyl-binding domains span residues 2–75 (SKQI…LVLE) and 108–181 (IVEV…MRFE). Lysine 41 and lysine 147 each carry N6-lipoyllysine. Residues 192 to 238 (SAPASTSAPQTAAPATTAQAPQAAAPDTTAQAPQAAAPDTTAQAAQS) show a composition bias toward low complexity. The tract at residues 192 to 249 (SAPASTSAPQTAAPATTAQAPQAAAPDTTAQAPQAAAPDTTAQAAQSNNNVSGLSQEQ) is disordered. Polar residues predominate over residues 239 to 249 (NNNVSGLSQEQ). Residues 258-295 (HATPVIRRLAREFGVNLDKVKGTGRKGRIVKEDIEAYV) form the Peripheral subunit-binding (PSBD) domain. Residues cysteine 484, histidine 540, and aspartate 544 contribute to the active site.

Belongs to the 2-oxoacid dehydrogenase family. Forms a 24-polypeptide structural core with octahedral symmetry. It depends on (R)-lipoate as a cofactor.

The enzyme catalyses N(6)-[(R)-dihydrolipoyl]-L-lysyl-[protein] + acetyl-CoA = N(6)-[(R)-S(8)-acetyldihydrolipoyl]-L-lysyl-[protein] + CoA. Its function is as follows. The pyruvate dehydrogenase complex catalyzes the overall conversion of pyruvate to acetyl-CoA and CO(2). It contains multiple copies of three enzymatic components: pyruvate dehydrogenase (E1), dihydrolipoamide acetyltransferase (E2) and lipoamide dehydrogenase (E3). The sequence is that of Dihydrolipoyllysine-residue acetyltransferase component of pyruvate dehydrogenase complex (aceF) from Haemophilus influenzae (strain ATCC 51907 / DSM 11121 / KW20 / Rd).